A 283-amino-acid chain; its full sequence is MYPSLDDDFVSDLFCFDQSNGAELDDYTQFGVNLQTDQEDTFPDFVSYGVNLQQEPDEVFSIGASQLDLSSYNGVLSLEPEQVGQQDCEVVQEEEVEINSGSSGGAVKEEQEHLDDDCSRKRARTGSCSRGGGTKACRERLRREKLNERFMDLSSVLEPGRTPKTDKPAILDDAIRILNQLRDEALKLEETNQKLLEEIKSLKAEKNELREEKLVLKADKEKTEQQLKSMTAPSSGFIPHIPAAFNHNKMAVYPSYGYMPMWHYMPQSVRDTSRDQELRPPAA.

The tract at residues 96-134 is disordered; it reads VEINSGSSGGAVKEEQEHLDDDCSRKRARTGSCSRGGGT. Residues 107-120 show a composition bias toward basic and acidic residues; the sequence is VKEEQEHLDDDCSR. The bHLH domain maps to 130–181; sequence RGGGTKACRERLRREKLNERFMDLSSVLEPGRTPKTDKPAILDDAIRILNQL.

As to quaternary structure, homodimer. Interacts with BTS and BHLH47/PYE.

The protein resides in the nucleus. The chain is Transcription factor bHLH104 (BHLH104) from Arabidopsis thaliana (Mouse-ear cress).